Reading from the N-terminus, the 63-residue chain is Cecropin-C (63 aa).

Residues 1-23 (MNFNKIFVFVALILAISLGQSEA) form the signal peptide. Arg-62 carries the post-translational modification Arginine amide.

This sequence belongs to the cecropin family.

The protein resides in the secreted. In terms of biological role, cecropins have lytic and antibacterial activity against several Gram-positive and Gram-negative bacteria. This is Cecropin-C (CecC) from Drosophila orena (Fruit fly).